The sequence spans 443 residues: Xaa-Pro dipeptidase (443 aa).

Mn(2+) contacts are provided by Asp246, Asp257, His339, Glu384, and Glu423.

This sequence belongs to the peptidase M24B family. Bacterial-type prolidase subfamily. The cofactor is Mn(2+).

The enzyme catalyses Xaa-L-Pro dipeptide + H2O = an L-alpha-amino acid + L-proline. Functionally, splits dipeptides with a prolyl residue in the C-terminal position. In Cronobacter sakazakii (strain ATCC BAA-894) (Enterobacter sakazakii), this protein is Xaa-Pro dipeptidase.